The following is a 335-amino-acid chain: GTPase Obg (335 aa).

Residues 1 to 158 (MFVDQITLEL…RLVELELKLI (158 aa)) enclose the Obg domain. The OBG-type G domain maps to 159-334 (ADIGLVGFPN…LYDLFKSKLS (176 aa)). GTP is bound by residues 165–172 (GFPNAGKS), 190–194 (FTTLH), 215–218 (DIPG), 285–288 (NKID), and 315–317 (SGL). Mg(2+) is bound by residues S172 and T192.

It belongs to the TRAFAC class OBG-HflX-like GTPase superfamily. OBG GTPase family. As to quaternary structure, monomer. Requires Mg(2+) as cofactor.

The protein resides in the cytoplasm. In terms of biological role, an essential GTPase which binds GTP, GDP and possibly (p)ppGpp with moderate affinity, with high nucleotide exchange rates and a fairly low GTP hydrolysis rate. Plays a role in control of the cell cycle, stress response, ribosome biogenesis and in those bacteria that undergo differentiation, in morphogenesis control. The chain is GTPase Obg from Chlamydia trachomatis serovar L2 (strain ATCC VR-902B / DSM 19102 / 434/Bu).